Consider the following 334-residue polypeptide: MATIKDVARLAGVSTTTVSHVINKTRFVAEATQEKVMKAVDELNYAPSAVARSLKCNSTRTIGMLVTQSTNLFFSEVIDGVESYCYRQGYTLILCNTGGIYEKQRDYIRMLAEKRVDGILVMCSDLTEELKEMLDRHSDIPKVVMDWGPESSRADKIIDNSEEGGYLATKYLIDNGHTDIACLSGHFEKLACQERIAGFRRAMAEAKLPINEDWILEGNFECDTAVLVADKITAMEKRPTAVFCFNDTMALGLMSRLQQNGIKVPDDVSVIGYDNIELAEYFSPPLTTIHQPKRRVGKNAFEILLERIKDKEHEKRVFEMQPEIVIRNTVKKLN.

The HTH lacI-type domain occupies 2–56 (ATIKDVARLAGVSTTTVSHVINKTRFVAEATQEKVMKAVDELNYAPSAVARSLKC). The H-T-H motif DNA-binding region spans 4–23 (IKDVARLAGVSTTTVSHVIN). The DNA-binding element occupies 48–56 (SAVARSLKC). Hypoxanthine is bound by residues phenylalanine 73, lysine 189, phenylalanine 220, and aspartate 274.

As to quaternary structure, homodimer.

The protein operates within purine metabolism; purine nucleotide biosynthesis [regulation]. Is the main repressor of the genes involved in the de novo synthesis of purine nucleotides, regulating purB, purC, purEK, purF, purHD, purL, purMN and guaBA expression. PurR is allosterically activated to bind its cognate DNA by binding the purine corepressors, hypoxanthine or guanine, thereby effecting transcription repression. The sequence is that of HTH-type transcriptional repressor PurR from Vibrio parahaemolyticus serotype O3:K6 (strain RIMD 2210633).